The primary structure comprises 108 residues: Precursor of CEP16 (108 aa).

Residues 1-27 (MVMAKNLTKFYVVFLVVLMMVVSLLLA) form the signal peptide. The propeptide occupies 28–92 (IEGRPVKDSS…VGHHRAKGYK (65 aa)). Residues N50 and N98 are each glycosylated (N-linked (GlcNAc...) asparagine). Residues 76–108 (QSGPSPGVGHHRAKGYKMFGRANDSGPSPGVGH) form a disordered region. 2 positions are modified to hydroxyproline: P102 and P104.

This sequence belongs to the C-terminally encoded plant signaling peptide (CEP) family. As to quaternary structure, interacts with CEP receptors (e.g. CEPR1 and CEPR2). The mature small signaling peptide is generated by proteolytic processing of the longer precursor.

The protein resides in the secreted. Its subcellular location is the extracellular space. The protein localises to the apoplast. Extracellular signaling peptide that may regulate primary root growth rate and systemic nitrogen (N)-demand signaling. This Arabidopsis thaliana (Mouse-ear cress) protein is Precursor of CEP16.